Consider the following 104-residue polypeptide: Viral histone-like protein (104 aa).

This sequence belongs to the bacterial histone-like protein family. Homodimer.

The protein resides in the virion. With respect to regulation, stilbene derivatives SD1 and SD4 disrupt the binding between pA104R and DNA and inhibit the viral replication in primary alveolar macrophages. Functionally, DNA-binding protein that plays a critical role in nucleoid compaction, genome replication and DNA replication and transcription. Binds to both ssDNA and dsDNA with a binding site covering about 15 nucleotides. Displays DNA-supercoiling activity only when associated with the viral DNA topoisomerase 2. This is Viral histone-like protein from African swine fever virus (strain Badajoz 1971 Vero-adapted) (Ba71V).